Reading from the N-terminus, the 292-residue chain is ATP synthase gamma chain (292 aa).

It belongs to the ATPase gamma chain family. F-type ATPases have 2 components, CF(1) - the catalytic core - and CF(0) - the membrane proton channel. CF(1) has five subunits: alpha(3), beta(3), gamma(1), delta(1), epsilon(1). CF(0) has three main subunits: a, b and c.

It localises to the cell inner membrane. Its function is as follows. Produces ATP from ADP in the presence of a proton gradient across the membrane. The gamma chain is believed to be important in regulating ATPase activity and the flow of protons through the CF(0) complex. The sequence is that of ATP synthase gamma chain from Brucella canis (strain ATCC 23365 / NCTC 10854 / RM-666).